The primary structure comprises 128 residues: Fluoride-specific ion channel FluC (128 aa).

Helical transmembrane passes span 5 to 25 (IVAI…LGLA), 35 to 55 (LGTL…AVVF), 67 to 87 (LFVI…SVEV), and 96 to 116 (FGWA…LTAL). The Na(+) site is built by Gly75 and Thr78.

It belongs to the fluoride channel Fluc/FEX (TC 1.A.43) family.

The protein localises to the cell inner membrane. It catalyses the reaction fluoride(in) = fluoride(out). Its activity is regulated as follows. Na(+) is not transported, but it plays an essential structural role and its presence is essential for fluoride channel function. Functionally, fluoride-specific ion channel. Important for reducing fluoride concentration in the cell, thus reducing its toxicity. This chain is Fluoride-specific ion channel FluC, found in Burkholderia vietnamiensis (strain G4 / LMG 22486) (Burkholderia cepacia (strain R1808)).